A 189-amino-acid chain; its full sequence is GTP cyclohydrolase 1 (189 aa).

Residues cysteine 78, histidine 81, and cysteine 150 each coordinate Zn(2+).

It belongs to the GTP cyclohydrolase I family. Toroid-shaped homodecamer, composed of two pentamers of five dimers.

The catalysed reaction is GTP + H2O = 7,8-dihydroneopterin 3'-triphosphate + formate + H(+). It functions in the pathway cofactor biosynthesis; 7,8-dihydroneopterin triphosphate biosynthesis; 7,8-dihydroneopterin triphosphate from GTP: step 1/1. The chain is GTP cyclohydrolase 1 from Listeria innocua serovar 6a (strain ATCC BAA-680 / CLIP 11262).